The chain runs to 668 residues: DNA ligase (668 aa).

Residues 34-38, 83-84, and Glu114 each bind NAD(+); these read DTEYD and SL. Lys116 acts as the N6-AMP-lysine intermediate in catalysis. Arg137, Glu171, Lys286, and Lys310 together coordinate NAD(+). Cys404, Cys407, Cys422, and Cys427 together coordinate Zn(2+). The BRCT domain maps to 588-668; the sequence is NSDSIIANKS…FFDLLKSEKG (81 aa).

This sequence belongs to the NAD-dependent DNA ligase family. LigA subfamily. Requires Mg(2+) as cofactor. Mn(2+) serves as cofactor.

The catalysed reaction is NAD(+) + (deoxyribonucleotide)n-3'-hydroxyl + 5'-phospho-(deoxyribonucleotide)m = (deoxyribonucleotide)n+m + AMP + beta-nicotinamide D-nucleotide.. Functionally, DNA ligase that catalyzes the formation of phosphodiester linkages between 5'-phosphoryl and 3'-hydroxyl groups in double-stranded DNA using NAD as a coenzyme and as the energy source for the reaction. It is essential for DNA replication and repair of damaged DNA. In Mycoplasma mycoides subsp. mycoides SC (strain CCUG 32753 / NCTC 10114 / PG1), this protein is DNA ligase.